The following is a 127-amino-acid chain: Basic leucine zipper transcriptional factor ATF-like 3 (127 aa).

Residues 1-72 (MSQGLPAAGS…LHEEYESLEQ (72 aa)) are disordered. A phosphoserine mark is found at Ser2 and Ser31. The region spanning 35 to 98 (DDRKVRRREK…KHLTEALKEH (64 aa)) is the bZIP domain. The basic motif stretch occupies residues 37–62 (RKVRRREKNRVAAQRSRKKQTQKADK). Positions 58 to 67 (QKADKLHEEY) are enriched in basic and acidic residues. The segment at 63–91 (LHEEYESLEQENTMLRREIGKLTEELKHL) is leucine-zipper.

The protein belongs to the bZIP family. Heterodimer; heterodimerizes with JUN family proteins. Interacts with JUN.

It is found in the nucleus. In terms of biological role, AP-1 family transcription factor that controls the differentiation of CD8(+) thymic conventional dendritic cells in the immune system. Required for development of CD8-alpha(+) classical dendritic cells (cDCs) and related CD103(+) dendritic cells that cross-present antigens to CD8 T-cells and produce interleukin-12 (IL12) in response to pathogens. Acts via the formation of a heterodimer with JUN family proteins that recognizes and binds DNA sequence 5'-TGA[CG]TCA-3' and regulates expression of target genes. The sequence is that of Basic leucine zipper transcriptional factor ATF-like 3 (BATF3) from Homo sapiens (Human).